Consider the following 863-residue polypeptide: MSGRDNRGAGGGGGGGHHHQPLSSAMGKLKEKLTRAGEELGYHRVESNLSASNTGTSLDTILPEDPFPFPQAAPQRHPQQQFPHLHPLRLLHDVDDEPPLSFRPLLEDDDINEPPQQIQQQRSALRSSGSLELTPLPPPPTSLEPHRDRQQRSIVTGGEELQRSKQSLKGSRVSFEKPQQQGNNKAAESSDEDSFEDKRIGFQQQKATSVDHKGILKDLRHILANDNRRQFQAKKHVSLDIKGTRFLQDLLKDSSSEEEFHKTRREFQGRKHQSLDPRVTFKLDKVLQGSSTDSDEEGDDAEHKRLIHRPKDITKPVIIDLKDLESESDEDFLTSRQNFQQQRSISTDSRKSRRLYEMDEMGNKRGDNIRHAVPFVRQITEDGKPKLEVYRPTTNPIYIWTQVLAALSVSLGSLVVGFASAYTSPALVSMTNTNLTSFVVTPQAASWVGGIMPLAGLAGGIAGGPFIEYLGRRNTILATAVPFIISWLLIACAVNVVMVLCGRFLAGFCVGIASLSLPVYLGETVQPEVRGTLGLLPTAFGNIGILLCFVAGTYMDWSMLAFLGGTLPVPFLILMFLIPETPRWYVSRGREERARKALVWLRGKEADVEPELKGLMRSQADADRQATQNTMLELLKRSNLKPLSISLGLMFFQQLSGINAVIFYTVQIFQDAGSTIDGNVCTIIVGVVNFMATFIATVLIDRAGRKILLYVSNVAMILTLFVLGGFFYCKSTGMDTSNVGWLPLSCFVVYILGFSLGFGPIPWLMMGEILPAKIRGSAASVATAFNWSCTFVVTKSFQDMIDVMGAHGAFWMFGAICFVGLFFVIFYVPETQGKTLEDIERKMMGRVRRMSSVANIKPLSFNM.

The tract at residues 1-208 (MSGRDNRGAG…RIGFQQQKAT (208 aa)) is disordered. Topologically, residues 1 to 398 (MSGRDNRGAG…VYRPTTNPIY (398 aa)) are cytoplasmic. Positions 28 to 46 (KLKEKLTRAGEELGYHRVE) are enriched in basic and acidic residues. The segment covering 47–59 (SNLSASNTGTSLD) has biased composition (polar residues). Low complexity predominate over residues 72-85 (AAPQRHPQQQFPHL). Polar residues-rich tracts occupy residues 114-129 (PPQQIQQQRSALRSSG) and 177-187 (KPQQQGNNKAA). A phosphoserine mark is found at Ser-254, Ser-255, and Ser-256. Residues 286–307 (VLQGSSTDSDEEGDDAEHKRLI) are disordered. Residues Ser-326 and Ser-328 each carry the phosphoserine modification. A disordered region spans residues 332–354 (FLTSRQNFQQQRSISTDSRKSRR). The segment covering 336 to 347 (RQNFQQQRSIST) has biased composition (polar residues). Residues 399 to 419 (IWTQVLAALSVSLGSLVVGFA) form a helical membrane-spanning segment. Over 420–446 (SAYTSPALVSMTNTNLTSFVVTPQAAS) the chain is Extracellular. Asn-434 carries N-linked (GlcNAc...) asparagine glycosylation. A helical membrane pass occupies residues 447–467 (WVGGIMPLAGLAGGIAGGPFI). The Cytoplasmic portion of the chain corresponds to 468 to 479 (EYLGRRNTILAT). Residues 480–500 (AVPFIISWLLIACAVNVVMVL) traverse the membrane as a helical segment. Residues 501 to 503 (CGR) lie on the Extracellular side of the membrane. A helical transmembrane segment spans residues 504 to 524 (FLAGFCVGIASLSLPVYLGET). Residues 525–530 (VQPEVR) are Cytoplasmic-facing. A helical membrane pass occupies residues 531 to 551 (GTLGLLPTAFGNIGILLCFVA). Over 552–558 (GTYMDWS) the chain is Extracellular. The helical transmembrane segment at 559 to 579 (MLAFLGGTLPVPFLILMFLIP) threads the bilayer. The Cytoplasmic segment spans residues 580–642 (ETPRWYVSRG…ELLKRSNLKP (63 aa)). Residues 643–663 (LSISLGLMFFQQLSGINAVIF) traverse the membrane as a helical segment. At 664-679 (YTVQIFQDAGSTIDGN) the chain is on the extracellular side. The helical transmembrane segment at 680-700 (VCTIIVGVVNFMATFIATVLI) threads the bilayer. Residues 701 to 706 (DRAGRK) are Cytoplasmic-facing. The chain crosses the membrane as a helical span at residues 707–727 (ILLYVSNVAMILTLFVLGGFF). The Extracellular segment spans residues 728–746 (YCKSTGMDTSNVGWLPLSC). The chain crosses the membrane as a helical span at residues 747–767 (FVVYILGFSLGFGPIPWLMMG). At 768–773 (EILPAK) the chain is on the cytoplasmic side. The helical transmembrane segment at 774 to 794 (IRGSAASVATAFNWSCTFVVT) threads the bilayer. Over 795–807 (KSFQDMIDVMGAH) the chain is Extracellular. A helical transmembrane segment spans residues 808-828 (GAFWMFGAICFVGLFFVIFYV). Residues 829–863 (PETQGKTLEDIERKMMGRVRRMSSVANIKPLSFNM) are Cytoplasmic-facing. Phosphoserine is present on residues Ser-851 and Ser-852.

Belongs to the major facilitator superfamily. Sugar transporter (TC 2.A.1.1) family. Trehalose transporter subfamily.

It localises to the cell membrane. Its function is as follows. Low-capacity facilitative transporter for trehalose. Does not transport maltose, sucrose or lactose. Mediates the bidirectional transfer of trehalose. Responsible for the transport of trehalose synthesized in the fat body and the incorporation of trehalose into other tissues that require a carbon source, thereby regulating trehalose levels in the hemolymph. In Drosophila mojavensis (Fruit fly), this protein is Facilitated trehalose transporter Tret1.